The following is a 266-amino-acid chain: Putative carbamate hydrolase RutD (266 aa).

This sequence belongs to the AB hydrolase superfamily. Hydrolase RutD family.

The enzyme catalyses carbamate + 2 H(+) = NH4(+) + CO2. In terms of biological role, involved in pyrimidine catabolism. May facilitate the hydrolysis of carbamate, a reaction that can also occur spontaneously. The sequence is that of Putative carbamate hydrolase RutD from Escherichia coli O103:H2 (strain 12009 / EHEC).